Reading from the N-terminus, the 724-residue chain is uncharacterized protein (724 aa).

This is an uncharacterized protein from Treponema pallidum (strain Nichols).